A 459-amino-acid chain; its full sequence is Glutathione reductase (459 aa).

Residues S14, G15, E34, T41, C42, K50, and A114 each coordinate FAD. Glutathione is bound at residue S14. C42 and C47 form a disulfide bridge. 5 residues coordinate NADP(+): I177, E180, R197, K203, and G262. 2 residues coordinate FAD: D313 and T321. R329 lines the glutathione pocket. A351 serves as a coordination point for NADP(+). FAD is bound at residue H448. The active-site Proton acceptor is H448.

This sequence belongs to the class-I pyridine nucleotide-disulfide oxidoreductase family. Homodimer. FAD is required as a cofactor.

The protein localises to the cytoplasm. It catalyses the reaction 2 glutathione + NADP(+) = glutathione disulfide + NADPH + H(+). Functionally, catalyzes the reduction of glutathione disulfide (GSSG) to reduced glutathione (GSH). Constitutes the major mechanism to maintain a high GSH:GSSG ratio in the cytosol. The chain is Glutathione reductase (gor) from Nostoc sp. (strain PCC 7120 / SAG 25.82 / UTEX 2576).